The primary structure comprises 384 residues: Beta-ureidopropionase (384 aa).

One can recognise a CN hydrolase domain in the interval valine 72–leucine 344. The Proton acceptor role is filled by glutamate 119. Catalysis depends on lysine 196, which acts as the Proton donor. The Nucleophile role is filled by cysteine 233. A Phosphoserine modification is found at serine 378.

It belongs to the carbon-nitrogen hydrolase superfamily. BUP family. In terms of assembly, homodimer, homotetramer, homooctamer; can also form higher homooligomers.

Its subcellular location is the cytoplasm. It catalyses the reaction 3-(carbamoylamino)propanoate + H2O + 2 H(+) = beta-alanine + NH4(+) + CO2. The catalysed reaction is 3-(carbamoylamino)-2-methylpropanoate + H2O + 2 H(+) = (R)-3-amino-2-methylpropanoate + NH4(+) + CO2. The protein operates within amino-acid biosynthesis; beta-alanine biosynthesis. Its function is as follows. Catalyzes a late step in pyrimidine degradation. Converts N-carbamoyl-beta-alanine (3-ureidopropanoate) into beta-alanine, ammonia and carbon dioxide. Likewise, converts N-carbamoyl-beta-aminoisobutyrate (3-ureidoisobutyrate) into beta-aminoisobutyrate, ammonia and carbon dioxide. This chain is Beta-ureidopropionase (UPB1), found in Pongo abelii (Sumatran orangutan).